The chain runs to 95 residues: Acylphosphatase (95 aa).

The region spanning 8–95 is the Acylphosphatase-like domain; the sequence is RVSARITGRV…DAFEGFRVRR (88 aa). Catalysis depends on residues R23 and N41.

It belongs to the acylphosphatase family.

It carries out the reaction an acyl phosphate + H2O = a carboxylate + phosphate + H(+). This Salinibacter ruber (strain DSM 13855 / M31) protein is Acylphosphatase (acyP).